The primary structure comprises 556 residues: Aplysianin-A (556 aa).

Residues 1–19 form the signal peptide; sequence MAVRFLALGLLIFVTSCSG. N-linked (GlcNAc...) asparagine glycosylation is found at Asn-150, Asn-177, Asn-374, Asn-399, Asn-414, and Asn-430.

To A.fulica achacin protein. Homotetramer. Albumen gland.

Its function is as follows. Has antibacterial activity against Gram-negative and Gram-positive bacteria. The chain is Aplysianin-A from Aplysia kurodai (Kuroda's sea hare).